The following is a 556-amino-acid chain: Urocanate hydratase (556 aa).

Residues 52–53 (GG), glutamine 130, 176–178 (GMG), glutamate 196, arginine 201, 242–243 (NA), 263–267 (QTSAH), 273–274 (YL), and tyrosine 322 contribute to the NAD(+) site. Cysteine 410 is a catalytic residue. Glycine 492 is a binding site for NAD(+).

It belongs to the urocanase family. NAD(+) serves as cofactor.

The protein localises to the cytoplasm. The catalysed reaction is 4-imidazolone-5-propanoate = trans-urocanate + H2O. It participates in amino-acid degradation; L-histidine degradation into L-glutamate; N-formimidoyl-L-glutamate from L-histidine: step 2/3. Functionally, catalyzes the conversion of urocanate to 4-imidazolone-5-propionate. The chain is Urocanate hydratase from Shewanella woodyi (strain ATCC 51908 / MS32).